We begin with the raw amino-acid sequence, 156 residues long: Small ribosomal subunit protein uS7 (156 aa).

Belongs to the universal ribosomal protein uS7 family. Part of the 30S ribosomal subunit. Contacts proteins S9 and S11.

One of the primary rRNA binding proteins, it binds directly to 16S rRNA where it nucleates assembly of the head domain of the 30S subunit. Is located at the subunit interface close to the decoding center, probably blocks exit of the E-site tRNA. The chain is Small ribosomal subunit protein uS7 from Prochlorococcus marinus subsp. pastoris (strain CCMP1986 / NIES-2087 / MED4).